We begin with the raw amino-acid sequence, 342 residues long: Holliday junction branch migration complex subunit RuvB (342 aa).

The segment at 1 to 185 (MRKDYLNSNK…FGINTRLAYY (185 aa)) is large ATPase domain (RuvB-L). Residues Leu24, Arg25, Gly66, Lys69, Thr70, Thr71, 132-134 (EDF), Arg175, Tyr185, and Arg222 each bind ATP. Thr70 lines the Mg(2+) pocket. The tract at residues 186–256 (DVTLLTQIVK…IAQMALKALD (71 aa)) is small ATPAse domain (RuvB-S). The segment at 259–342 (EDGLDEMDNR…PPQRAGTLFE (84 aa)) is head domain (RuvB-H). DNA is bound by residues Arg314 and Arg319.

Belongs to the RuvB family. As to quaternary structure, homohexamer. Forms an RuvA(8)-RuvB(12)-Holliday junction (HJ) complex. HJ DNA is sandwiched between 2 RuvA tetramers; dsDNA enters through RuvA and exits via RuvB. An RuvB hexamer assembles on each DNA strand where it exits the tetramer. Each RuvB hexamer is contacted by two RuvA subunits (via domain III) on 2 adjacent RuvB subunits; this complex drives branch migration. In the full resolvosome a probable DNA-RuvA(4)-RuvB(12)-RuvC(2) complex forms which resolves the HJ.

The protein localises to the cytoplasm. It carries out the reaction ATP + H2O = ADP + phosphate + H(+). Its function is as follows. The RuvA-RuvB-RuvC complex processes Holliday junction (HJ) DNA during genetic recombination and DNA repair, while the RuvA-RuvB complex plays an important role in the rescue of blocked DNA replication forks via replication fork reversal (RFR). RuvA specifically binds to HJ cruciform DNA, conferring on it an open structure. The RuvB hexamer acts as an ATP-dependent pump, pulling dsDNA into and through the RuvAB complex. RuvB forms 2 homohexamers on either side of HJ DNA bound by 1 or 2 RuvA tetramers; 4 subunits per hexamer contact DNA at a time. Coordinated motions by a converter formed by DNA-disengaged RuvB subunits stimulates ATP hydrolysis and nucleotide exchange. Immobilization of the converter enables RuvB to convert the ATP-contained energy into a lever motion, pulling 2 nucleotides of DNA out of the RuvA tetramer per ATP hydrolyzed, thus driving DNA branch migration. The RuvB motors rotate together with the DNA substrate, which together with the progressing nucleotide cycle form the mechanistic basis for DNA recombination by continuous HJ branch migration. Branch migration allows RuvC to scan DNA until it finds its consensus sequence, where it cleaves and resolves cruciform DNA. The polypeptide is Holliday junction branch migration complex subunit RuvB (Amoebophilus asiaticus (strain 5a2)).